A 504-amino-acid polypeptide reads, in one-letter code: MVAPGSVGSRLGAVFPFLLVLVDLQYEGAECGVNADVEKHLELGKKLLAAGQLADALSQFHAAVDGDPDNYIAYYRRATVFLAMGKSKAALPDLTKVIALKMDFTAARLQRGHLLLKQGKLDEAEDDFKKVLKSNPSEQEEKEAESQLVKADEMQRLRSQALDAFDGADYTAAITFLDKILEVCVWDAELRELRAECFIKEGEPRKAISDLKAASKLKSDNTEAFYKISTLYYQLGDHELSLSEVRECLKLDQDHKRCFAHYKQVKKLNKLIESAEELIRDGRYTDATSKYESVMKTEPSVAEYTVRSKERICHCFSKDEKPVEAIRICSEVLQMEPDNVNALKDRAEAYLIEEMYDEAIQDYEAAQEHNENDQQIREGLEKAQRLLKQSQKRDYYKILGVKRNAKKQEIIKAYRKLALQWHPDNFQNEEEKKKAEKKFIDIAAAKEVLSDPEMRKKFDDGEDPLDAESQQGGGGNPFHRSWNSWQGFNPFSSGGPFRFKFHFN.

The first 31 residues, 1-31 (MVAPGSVGSRLGAVFPFLLVLVDLQYEGAEC), serve as a signal peptide directing secretion. TPR repeat units follow at residues 37–70 (VEKHLELGKKLLAAGQLADALSQFHAAVDGDPDN), 72–104 (IAYYRRATVFLAMGKSKAALPDLTKVIALKMDF), 105–138 (TAARLQRGHLLLKQGKLDEAEDDFKKVLKSNPSE), 154–187 (MQRLRSQALDAFDGADYTAAITFLDKILEVCVWD), 188–221 (AELRELRAECFIKEGEPRKAISDLKAASKLKSDN), 222–255 (TEAFYKISTLYYQLGDHELSLSEVRECLKLDQDH), 268–301 (LNKLIESAEELIRDGRYTDATSKYESVMKTEPSV), 306–339 (VRSKERICHCFSKDEKPVEAIRICSEVLQMEPDN), and 340–373 (VNALKDRAEAYLIEEMYDEAIQDYEAAQEHNEND). Cys248 and Cys258 are oxidised to a cystine. A Phosphoserine modification is found at Ser274. An intrachain disulfide couples Cys313 to Cys329. The interval 375 to 393 (QIREGLEKAQRLLKQSQKR) is flexible linker. In terms of domain architecture, J spans 394–462 (DYYKILGVKR…EMRKKFDDGE (69 aa)). The segment at 451-481 (DPEMRKKFDDGEDPLDAESQQGGGGNPFHRS) is disordered.

In terms of assembly, interacts with EIF2AK4/GCN2; this interaction occurs under endoplasmic reticulum (ER) stress, hypothermic and amino acid starving stress conditions and inhibits EIF2AK4/GCN2 kinase activity. Interacts with EIF2AK3. Interacts with EIF2AK2. Forms a trimeric complex with DNAJB1 and HSPA8. Interacts with THAP12. In terms of tissue distribution, widely expressed, with high level in the liver.

It is found in the endoplasmic reticulum. In terms of biological role, involved in the unfolded protein response (UPR) during endoplasmic reticulum (ER) stress. Acts as a negative regulator of the EIF2AK4/GCN2 kinase activity by preventing the phosphorylation of eIF-2-alpha at 'Ser-52' and hence attenuating general protein synthesis under ER stress, hypothermic and amino acid starving stress conditions. Co-chaperone of HSPA8/HSC70, it stimulates its ATPase activity. May inhibit both the autophosphorylation of EIF2AK2/PKR and the ability of EIF2AK2 to catalyze phosphorylation of the EIF2A. May inhibit EIF2AK3/PERK activity. This Mus musculus (Mouse) protein is DnaJ homolog subfamily C member 3 (Dnajc3).